Reading from the N-terminus, the 387-residue chain is Monopolar spindle protein 2 (387 aa).

Residues 157-269 (KNIGKALEVQ…FLKDQIRRER (113 aa)) are a coiled coil. A disordered region spans residues 216–235 (RQVEDNQNSSRTSDPGSPLV). Positions 220–230 (DNQNSSRTSDP) are enriched in polar residues. A helical membrane pass occupies residues 311–327 (IRIIVCFALLAGVLPYI).

The protein belongs to the MPS2 family. In terms of assembly, interacts with BBP1, MPS3, and SPC24.

The protein localises to the nucleus membrane. The protein resides in the cytoplasm. Its subcellular location is the cytoskeleton. It is found in the microtubule organizing center. It localises to the spindle pole body. Its function is as follows. Component of the spindle pole body (SPB) required for insertion of the nascent SPB into the nuclear envelope and for the proper execution of spindle pole body (SPB) duplication. This is Monopolar spindle protein 2 (MPS2) from Saccharomyces cerevisiae (strain FostersB) (Baker's yeast).